The chain runs to 103 residues: Small ribosomal subunit protein uS10 (103 aa).

The protein belongs to the universal ribosomal protein uS10 family. Part of the 30S ribosomal subunit.

Functionally, involved in the binding of tRNA to the ribosomes. This is Small ribosomal subunit protein uS10 from Colwellia psychrerythraea (strain 34H / ATCC BAA-681) (Vibrio psychroerythus).